The sequence spans 101 residues: Large ribosomal subunit protein bL21 (101 aa).

The protein belongs to the bacterial ribosomal protein bL21 family. In terms of assembly, part of the 50S ribosomal subunit. Contacts protein L20.

This protein binds to 23S rRNA in the presence of protein L20. This is Large ribosomal subunit protein bL21 from Corynebacterium aurimucosum (strain ATCC 700975 / DSM 44827 / CIP 107346 / CN-1) (Corynebacterium nigricans).